A 456-amino-acid chain; its full sequence is ATP synthase subunit beta 1 (456 aa).

152 to 159 (GGAGVGKS) is a binding site for ATP.

The protein belongs to the ATPase alpha/beta chains family. As to quaternary structure, F-type ATPases have 2 components, CF(1) - the catalytic core - and CF(0) - the membrane proton channel. CF(1) has five subunits: alpha(3), beta(3), gamma(1), delta(1), epsilon(1). CF(0) has three main subunits: a(1), b(2) and c(9-12). The alpha and beta chains form an alternating ring which encloses part of the gamma chain. CF(1) is attached to CF(0) by a central stalk formed by the gamma and epsilon chains, while a peripheral stalk is formed by the delta and b chains.

Its subcellular location is the cell membrane. The enzyme catalyses ATP + H2O + 4 H(+)(in) = ADP + phosphate + 5 H(+)(out). Functionally, produces ATP from ADP in the presence of a proton gradient across the membrane. The catalytic sites are hosted primarily by the beta subunits. The polypeptide is ATP synthase subunit beta 1 (Listeria innocua serovar 6a (strain ATCC BAA-680 / CLIP 11262)).